The chain runs to 152 residues: MAKRVQLVLNQDISKLGKSGDLVEVAPGYARNYLIPQKLATNATPGILKQVERRREQERQRQLELRQQALEQKESLEKVGSLTIAKQVGENEAIFGTITTQDVADAIKAATGQEVDRRGITIPDINHLGTYQAEIKLYSDVAAQVDIQVVAS.

It belongs to the bacterial ribosomal protein bL9 family.

Its function is as follows. Binds to the 23S rRNA. This is Large ribosomal subunit protein bL9 from Nostoc punctiforme (strain ATCC 29133 / PCC 73102).